The sequence spans 982 residues: Protein lin-10 (982 aa).

Residues 1-16 are compositionally biased toward polar residues; that stretch reads MSSEAVAQATAATTSP. 5 disordered regions span residues 1-55, 119-228, 269-327, 432-511, and 525-593; these read MSSE…MIPP, QPAL…RTDS, TVAD…STVP, FAQQ…GTDD, and QREQ…SKET. Positions 33–44 are enriched in gly residues; it reads KGGGAGGGGGGE. The span at 119–134 shows a compositional bias: low complexity; sequence QPALQQPRPSSQASSS. Polar residues-rich tracts occupy residues 143–156 and 169–190; these read RQTA…NVSP and ETSG…SSDV. The segment covering 211–228 has biased composition (basic and acidic residues); that stretch reads GEEKSEEKRKLSGDRTDS. Positions 301 to 318 are enriched in polar residues; the sequence is SLNQLRSSFNLPDDSTTV. 2 stretches are compositionally biased toward low complexity: residues 432–445 and 454–464; these read FAQQ…APTP and PSTSSGPSGAL. A compositionally biased stretch (polar residues) spans 490–501; the sequence is NGTSTSTTNGAQ. The span at 539-550 shows a compositional bias: low complexity; the sequence is QEAATAAQEAAE. A compositionally biased stretch (basic and acidic residues) spans 577-593; the sequence is GAERRGSVDKKKNSKET. Residues 604 to 788 form the PID domain; that stretch reads GVLFRARYLG…VLNSQELLGD (185 aa). PDZ domains follow at residues 801–886 and 892–968; these read EVVV…TVVS and EVRI…MPTS.

In terms of assembly, interacts (via N-terminus) with egl-9 isoform e (via catalytic domain); the interaction regulates its trafficking; the interaction is direct. Interacts with rab-6.2 (in GTP-bound form). In terms of processing, phosphorylated on multiple Ser and Thr residues by cdk-5 which regulates its localization. May be hydroxylated by egl-9 isoform e on multiple Pro residues which may prevent phosphorylation by cdk-5. As to expression, expressed in vulval epithelial cells and neurons.

It is found in the golgi apparatus. It localises to the golgi stack membrane. The protein resides in the trans-Golgi network membrane. The protein localises to the cytoplasm. Its subcellular location is the synapse. It is found in the perikaryon. Required specifically for the determination of 3 vulval precursor cell fates P5.p, P6.p and P7.p during late second and early third larval stages; required for basolateral localization of receptor tyrosine kinase let-23. Could have a general but redundant role in development, functioning in diverse cell lineages to control cell fates. Regulates the trafficking of the glr-1 subunit of AMPA-type glutamate receptors (AMPRs) in the ventral nerve cord. This may be partly through interacting with the small GTPase rab-6.2 in its active GTP-bound state. This is Protein lin-10 from Caenorhabditis elegans.